The chain runs to 453 residues: Tol-Pal system protein TolB (453 aa).

The signal sequence occupies residues 1–31 (MINNLSVSMTKVLKIILTIIIILFNTLSILA).

This sequence belongs to the TolB family. The Tol-Pal system is composed of five core proteins: the inner membrane proteins TolA, TolQ and TolR, the periplasmic protein TolB and the outer membrane protein Pal. They form a network linking the inner and outer membranes and the peptidoglycan layer.

The protein localises to the periplasm. Part of the Tol-Pal system, which plays a role in outer membrane invagination during cell division and is important for maintaining outer membrane integrity. This is Tol-Pal system protein TolB from Orientia tsutsugamushi (strain Boryong) (Rickettsia tsutsugamushi).